The following is a 326-amino-acid chain: Protein farnesyltransferase/geranylgeranyltransferase type-1 subunit alpha (326 aa).

5 PFTA repeats span residues 55 to 89 (RSPRALRLTEETLLLNSGNYTVWHFRRLVLEALNH), 90 to 124 (DLFEELEFIERIAEDNSKNYQLWHHRRWVAEKLGP), 126 to 160 (VAGRELEFTRRVLSLDAKHYHAWSHRQWTLRALGG), 161 to 194 (WEDELDYCHELLEADVFNNSAWNQRYYVITQSPL), and 201 to 235 (MRESEVSYTIKAILTNPANESSWRYLKALYKDDKE).

It belongs to the protein prenyltransferase subunit alpha family. As to quaternary structure, heterodimer of an alpha and a beta subunit. Mg(2+) is required as a cofactor.

The catalysed reaction is L-cysteinyl-[protein] + (2E,6E)-farnesyl diphosphate = S-(2E,6E)-farnesyl-L-cysteinyl-[protein] + diphosphate. The enzyme catalyses geranylgeranyl diphosphate + L-cysteinyl-[protein] = S-geranylgeranyl-L-cysteinyl-[protein] + diphosphate. Its function is as follows. Essential subunit of both the farnesyltransferase and the geranylgeranyltransferase complex. Contributes to the transfer of a farnesyl or geranylgeranyl moiety from farnesyl or geranylgeranyl diphosphate to a cysteine at the fourth position from the C-terminus of several proteins having the C-terminal sequence Cys-aliphatic-aliphatic-X. This chain is Protein farnesyltransferase/geranylgeranyltransferase type-1 subunit alpha (FTA), found in Arabidopsis thaliana (Mouse-ear cress).